The following is a 502-amino-acid chain: ATP synthase subunit alpha (502 aa).

169–176 (GDRQTGKT) serves as a coordination point for ATP.

Belongs to the ATPase alpha/beta chains family. As to quaternary structure, F-type ATPases have 2 components, CF(1) - the catalytic core - and CF(0) - the membrane proton channel. CF(1) has five subunits: alpha(3), beta(3), gamma(1), delta(1), epsilon(1). CF(0) has three main subunits: a(1), b(2) and c(9-12). The alpha and beta chains form an alternating ring which encloses part of the gamma chain. CF(1) is attached to CF(0) by a central stalk formed by the gamma and epsilon chains, while a peripheral stalk is formed by the delta and b chains.

The protein localises to the cell membrane. The enzyme catalyses ATP + H2O + 4 H(+)(in) = ADP + phosphate + 5 H(+)(out). Functionally, produces ATP from ADP in the presence of a proton gradient across the membrane. The alpha chain is a regulatory subunit. In Exiguobacterium sp. (strain ATCC BAA-1283 / AT1b), this protein is ATP synthase subunit alpha.